Consider the following 140-residue polypeptide: ATP synthase epsilon chain (140 aa).

It belongs to the ATPase epsilon chain family. As to quaternary structure, F-type ATPases have 2 components, CF(1) - the catalytic core - and CF(0) - the membrane proton channel. CF(1) has five subunits: alpha(3), beta(3), gamma(1), delta(1), epsilon(1). CF(0) has three main subunits: a, b and c.

The protein localises to the cell inner membrane. Its function is as follows. Produces ATP from ADP in the presence of a proton gradient across the membrane. The sequence is that of ATP synthase epsilon chain from Neisseria meningitidis serogroup A / serotype 4A (strain DSM 15465 / Z2491).